Reading from the N-terminus, the 116-residue chain is SGSCSLKTCWLQLADFRKVGDALKEKYDSAAAMKLNSRGKLVQMNSRFNAPTIHDLIYIDPSPDYCMRNESTGSLGTQGRLCNKTSEGMDGCELMCCGRGYDQFKTVERERCNCKF.

A lipid anchor (O-palmitoleoyl serine; by PORCN) is attached at Ser1. 2 N-linked (GlcNAc...) asparagine glycosylation sites follow: Asn69 and Asn83. Cys82 and Cys97 form a disulfide bridge.

The protein belongs to the Wnt family. In terms of processing, palmitoleoylation is required for efficient binding to frizzled receptors. Depalmitoleoylation leads to Wnt signaling pathway inhibition.

It localises to the secreted. Its subcellular location is the extracellular space. It is found in the extracellular matrix. Its function is as follows. Ligand for members of the frizzled family of seven transmembrane receptors. Can activate or inhibit canonical Wnt signaling, depending on receptor context. Required during embryogenesis for extension of the primary anterior-posterior axis. This is Protein Wnt-5a (WNT5A) from Meleagris gallopavo (Wild turkey).